Here is a 129-residue protein sequence, read N- to C-terminus: MARVKRAVNAHKKRRTVLKASKGYRGQRSRLYRKAKEQQLHSLGYAYRDRRARKGEFRKLWISRINAAARANDITYNRLIQGLKAADVDVDRKNLADIAISDPAAFTALVEVARSGLPEDVNVPSGEAA.

The protein belongs to the bacterial ribosomal protein bL20 family.

Its function is as follows. Binds directly to 23S ribosomal RNA and is necessary for the in vitro assembly process of the 50S ribosomal subunit. It is not involved in the protein synthesizing functions of that subunit. This Mycobacterium leprae (strain Br4923) protein is Large ribosomal subunit protein bL20.